Consider the following 295-residue polypeptide: Acetylglutamate kinase (295 aa).

Residues 61–62 (GG), Arg-83, and Asn-187 contribute to the substrate site.

It belongs to the acetylglutamate kinase family. ArgB subfamily.

It localises to the cytoplasm. It catalyses the reaction N-acetyl-L-glutamate + ATP = N-acetyl-L-glutamyl 5-phosphate + ADP. Its pathway is amino-acid biosynthesis; L-arginine biosynthesis; N(2)-acetyl-L-ornithine from L-glutamate: step 2/4. Catalyzes the ATP-dependent phosphorylation of N-acetyl-L-glutamate. This chain is Acetylglutamate kinase, found in Methanocorpusculum labreanum (strain ATCC 43576 / DSM 4855 / Z).